We begin with the raw amino-acid sequence, 266 residues long: UPF0354 protein LMHCC_0955 (266 aa).

It belongs to the UPF0354 family.

This is UPF0354 protein LMHCC_0955 from Listeria monocytogenes serotype 4a (strain HCC23).